The following is a 214-amino-acid chain: Large ribosomal subunit protein uL3 (214 aa).

Positions 133–153 (GRATHGNSRSHNVPGSIGMAQ) are disordered. N5-methylglutamine is present on glutamine 153.

Belongs to the universal ribosomal protein uL3 family. As to quaternary structure, part of the 50S ribosomal subunit. Forms a cluster with proteins L14 and L19. Post-translationally, methylated by PrmB.

In terms of biological role, one of the primary rRNA binding proteins, it binds directly near the 3'-end of the 23S rRNA, where it nucleates assembly of the 50S subunit. The chain is Large ribosomal subunit protein uL3 from Cupriavidus metallidurans (strain ATCC 43123 / DSM 2839 / NBRC 102507 / CH34) (Ralstonia metallidurans).